We begin with the raw amino-acid sequence, 721 residues long: 1,4-alpha-glucan branching enzyme GlgB (721 aa).

Asp400 functions as the Nucleophile in the catalytic mechanism. The active-site Proton donor is Glu453.

It belongs to the glycosyl hydrolase 13 family. GlgB subfamily. As to quaternary structure, monomer.

It catalyses the reaction Transfers a segment of a (1-&gt;4)-alpha-D-glucan chain to a primary hydroxy group in a similar glucan chain.. It functions in the pathway glycan biosynthesis; glycogen biosynthesis. Catalyzes the formation of the alpha-1,6-glucosidic linkages in glycogen by scission of a 1,4-alpha-linked oligosaccharide from growing alpha-1,4-glucan chains and the subsequent attachment of the oligosaccharide to the alpha-1,6 position. This chain is 1,4-alpha-glucan branching enzyme GlgB, found in Chlamydia abortus (strain DSM 27085 / S26/3) (Chlamydophila abortus).